A 196-amino-acid polypeptide reads, in one-letter code: Proteasome subunit beta (196 aa).

Residue Met1 is a propeptide, removed in mature form; by autocatalysis. The active-site Nucleophile is the Thr2.

Belongs to the peptidase T1B family. As to quaternary structure, the 20S proteasome core is composed of 14 alpha and 14 beta subunits that assemble into four stacked heptameric rings, resulting in a barrel-shaped structure. The two inner rings, each composed of seven catalytic beta subunits, are sandwiched by two outer rings, each composed of seven alpha subunits. The catalytic chamber with the active sites is on the inside of the barrel. Has a gated structure, the ends of the cylinder being occluded by the N-termini of the alpha-subunits. Is capped at one or both ends by the proteasome regulatory ATPase, PAN.

It localises to the cytoplasm. It carries out the reaction Cleavage of peptide bonds with very broad specificity.. The formation of the proteasomal ATPase PAN-20S proteasome complex, via the docking of the C-termini of PAN into the intersubunit pockets in the alpha-rings, triggers opening of the gate for substrate entry. Interconversion between the open-gate and close-gate conformations leads to a dynamic regulation of the 20S proteasome proteolysis activity. Component of the proteasome core, a large protease complex with broad specificity involved in protein degradation. The protein is Proteasome subunit beta of Nanoarchaeum equitans (strain Kin4-M).